A 391-amino-acid polypeptide reads, in one-letter code: MNNTRVSFRSTKSLLAAIIATSMMTWSVNRATLQTTKATEAASTGWATQGGTTGGAKAASAKIYAVKNISEFKAALNGTDTDPKIIQVTGAIDISGGKAYTSFDDQKARSQISVPSNTTIIGIGSNGKFTNGSLVIKGVSNVILRNLYIETPVDVAPHYEEGDGWNAEWDAAVIDNSTRVWVDHVTISDGSFTDDKYTTKNGEKYVQHDGALDIKKGSDYVTISSSRFELHDKTILIGHSDSNGSQDSGKLRVTFHNNVFDRVTERTPRVRFGSIHAYNNVYLGDVKNSVYPYLYSFGLGTSGTILSESNSFTLSNLKSIDGKNPECSIVKQFNSKVFSDNGSLVNGSSTTKLDTCAVTAYKPTLPYKYSAQTMTSSLASSINSNAGYGKL.

Positions 1–31 (MNNTRVSFRSTKSLLAAIIATSMMTWSVNRA) are cleaved as a signal peptide. Ca(2+)-binding residues include Asp-170 and Asp-213. Arg-266 is a catalytic residue.

Belongs to the polysaccharide lyase 1 family. PLBC subfamily. Ca(2+) is required as a cofactor.

It localises to the secreted. It carries out the reaction Eliminative cleavage of (1-&gt;4)-alpha-D-galacturonan to give oligosaccharides with 4-deoxy-alpha-D-galact-4-enuronosyl groups at their non-reducing ends.. Its pathway is glycan metabolism; pectin degradation; 2-dehydro-3-deoxy-D-gluconate from pectin: step 2/5. In terms of biological role, involved in maceration and soft-rotting of plant tissue. The polypeptide is Pectate lyase D (pelD) (Dickeya chrysanthemi (Pectobacterium chrysanthemi)).